We begin with the raw amino-acid sequence, 592 residues long: Proteasome-associated ATPase (592 aa).

The span at 1-11 (MTGYDSSEEAE) shows a compositional bias: acidic residues. The segment at 1–24 (MTGYDSSEEAERDSSPADGYRQTP) is disordered. The stretch at 25-99 (AQLSAQIRVL…LKEEVDRLAQ (75 aa)) forms a coiled coil. An ATP-binding site is contributed by 281–286 (GCGKTL). Residues 591-592 (YL) form a docks into pockets in the proteasome alpha-ring region.

The protein belongs to the AAA ATPase family. In terms of assembly, homohexamer. Assembles into a hexameric ring structure that caps the 20S proteasome core. Strongly interacts with the prokaryotic ubiquitin-like protein Pup through a hydrophobic interface; the interacting region of ARC lies in its N-terminal coiled-coil domain. There is one Pup binding site per ARC hexamer ring. Upon ATP-binding, the C-terminus of ARC interacts with the alpha-rings of the proteasome core, possibly by binding to the intersubunit pockets.

The protein operates within protein degradation; proteasomal Pup-dependent pathway. Its function is as follows. ATPase which is responsible for recognizing, binding, unfolding and translocation of pupylated proteins into the bacterial 20S proteasome core particle. May be essential for opening the gate of the 20S proteasome via an interaction with its C-terminus, thereby allowing substrate entry and access to the site of proteolysis. Thus, the C-termini of the proteasomal ATPase may function like a 'key in a lock' to induce gate opening and therefore regulate proteolysis. In Nakamurella multipartita (strain ATCC 700099 / DSM 44233 / CIP 104796 / JCM 9543 / NBRC 105858 / Y-104) (Microsphaera multipartita), this protein is Proteasome-associated ATPase.